The sequence spans 501 residues: MSERCCSRYSSGASIGCTPTSTQAKMVSKRIAQETFDAAVRENIEEFAMGPEEAVKEAVEQFESQGVDLSNIVKTAPKVSADGSQEPTHDILQMLSDLQESVASSRPQEVSAYLTRFCDQCKQDKACRFLAAQKGAYPIIFTAWKLATAGDQGLLLQSLNALSVLTDGQPDLLDAQGLQLLVATLTQNADEADLTCSGIRCVRHACLKHEQNRQDLVKAGVLPLLTGAITHHGHHTDVVREACWALRVMTFDDDIRVPFGHAHNHAKMIVQENKGLKVLIEATKAFLDNPGILSELCGTLSRLAIRNEFCQEVVDLGGLSILVSLLADCNDHQMRDQSGVQELVKQVLSTLRAIAGNDDVKDAIVRAGGTESIVAAMTQHLTSPQVCEQSCAALCFLALRKPDNSRIIVEGGGAVAALQAMKAHPQKAGVQKQACMLIRNLVAHGQAFSKPILDLGAEALIMQARSAHRDCEDVAKAALRDLGCHVELRELWTGQRGNLAP.

Ser-64 carries the phosphoserine modification. ARM repeat units lie at residues 220–264 (GVLP…HAHN), 274–318 (KGLK…DLGG), 319–369 (LSIL…RAGG), and 370–412 (TESI…VEGG). Position 263 is a pros-methylhistidine (His-263).

Belongs to the ARMC6 family. Post-translationally, methylated at His-263 by METTL9.

The protein is Armadillo repeat-containing protein 6 (ARMC6) of Homo sapiens (Human).